We begin with the raw amino-acid sequence, 308 residues long: Serine/threonine-protein phosphatase PP1 (308 aa).

Residues D64, H66, D92, and N124 each contribute to the Mn(2+) site. The active-site Proton donor is the H125. Positions 173 and 248 each coordinate Mn(2+).

It belongs to the PPP phosphatase family. PP-1 subfamily. The cofactor is Mn(2+).

It is found in the cytoplasm. The enzyme catalyses O-phospho-L-seryl-[protein] + H2O = L-seryl-[protein] + phosphate. The catalysed reaction is O-phospho-L-threonyl-[protein] + H2O = L-threonyl-[protein] + phosphate. This chain is Serine/threonine-protein phosphatase PP1 (pph-3), found in Neurospora crassa (strain ATCC 24698 / 74-OR23-1A / CBS 708.71 / DSM 1257 / FGSC 987).